Reading from the N-terminus, the 628-residue chain is ATP-dependent zinc metalloprotease FtsH (628 aa).

Topologically, residues 1-7 (MKLSWKT) are stromal. A helical membrane pass occupies residues 8–28 (LLLWSLPIFVVGFFFWQGFLG). Residues 29–118 (PTTTDVGSNI…AHPPKSTSAV (90 aa)) are Lumenal-facing. The chain crosses the membrane as a helical span at residues 119-139 (WGLLGNLLFPLILVGGLAFLF). Topologically, residues 140-628 (RRSNNASGGP…PEKNYYISQF (489 aa)) are stromal. An ATP-binding site is contributed by 213–220 (GPPGTGKT). H434 contributes to the Zn(2+) binding site. E435 is a catalytic residue. H438 and D512 together coordinate Zn(2+).

In the central section; belongs to the AAA ATPase family. The protein in the C-terminal section; belongs to the peptidase M41 family. As to quaternary structure, homohexamer. Zn(2+) is required as a cofactor.

It is found in the plastid. The protein resides in the chloroplast thylakoid membrane. In terms of biological role, acts as a processive, ATP-dependent zinc metallopeptidase. This chain is ATP-dependent zinc metalloprotease FtsH, found in Porphyra purpurea (Red seaweed).